Consider the following 393-residue polypeptide: NAD(P)H-quinone oxidoreductase subunit H, chloroplastic (393 aa).

This sequence belongs to the complex I 49 kDa subunit family. As to quaternary structure, NDH is composed of at least 16 different subunits, 5 of which are encoded in the nucleus.

The protein localises to the plastid. It is found in the chloroplast thylakoid membrane. It carries out the reaction a plastoquinone + NADH + (n+1) H(+)(in) = a plastoquinol + NAD(+) + n H(+)(out). It catalyses the reaction a plastoquinone + NADPH + (n+1) H(+)(in) = a plastoquinol + NADP(+) + n H(+)(out). NDH shuttles electrons from NAD(P)H:plastoquinone, via FMN and iron-sulfur (Fe-S) centers, to quinones in the photosynthetic chain and possibly in a chloroplast respiratory chain. The immediate electron acceptor for the enzyme in this species is believed to be plastoquinone. Couples the redox reaction to proton translocation, and thus conserves the redox energy in a proton gradient. This Gossypium barbadense (Sea Island cotton) protein is NAD(P)H-quinone oxidoreductase subunit H, chloroplastic.